The primary structure comprises 100 residues: Small ribosomal subunit protein uS14c (100 aa).

It belongs to the universal ribosomal protein uS14 family. In terms of assembly, part of the 30S ribosomal subunit.

It localises to the plastid. It is found in the chloroplast. Binds 16S rRNA, required for the assembly of 30S particles. In Lotus japonicus (Lotus corniculatus var. japonicus), this protein is Small ribosomal subunit protein uS14c.